The sequence spans 234 residues: tRNA (guanine-N(1)-)-methyltransferase (234 aa).

S-adenosyl-L-methionine contacts are provided by residues Gly-110 and Ile-134–Leu-139.

This sequence belongs to the RNA methyltransferase TrmD family. Homodimer.

It localises to the cytoplasm. It catalyses the reaction guanosine(37) in tRNA + S-adenosyl-L-methionine = N(1)-methylguanosine(37) in tRNA + S-adenosyl-L-homocysteine + H(+). Specifically methylates guanosine-37 in various tRNAs. The sequence is that of tRNA (guanine-N(1)-)-methyltransferase from Tropheryma whipplei (strain TW08/27) (Whipple's bacillus).